We begin with the raw amino-acid sequence, 88 residues long: Transmembrane protein 069R (88 aa).

A run of 2 helical transmembrane segments spans residues 30-50 (ALWP…VFTA) and 67-87 (VGVF…GDSF).

It localises to the host membrane. The chain is Transmembrane protein 069R from Frog virus 3 (isolate Goorha) (FV-3).